Here is a 432-residue protein sequence, read N- to C-terminus: Tubulin-specific chaperone cofactor E-like protein (432 aa).

LRR repeat units follow at residues alanine 69–asparagine 94, leucine 95–proline 117, valine 118–leucine 140, leucine 143–serine 167, threonine 168–lysine 191, phenylalanine 193–glutamine 217, and leucine 218–arginine 242. An LRRCT region spans residues isoleucine 254–phenylalanine 295. Positions valine 324–isoleucine 415 are ubiquitin-like (UBL).

The protein localises to the cytoplasm. It localises to the cytoskeleton. Functionally, acts as a regulator of tubulin stability. Involved in microtubule-dependent neuronal function. May be involved in tubulin acetylation/deacetylation pathway. This chain is Tubulin-specific chaperone cofactor E-like protein, found in Caenorhabditis elegans.